The sequence spans 328 residues: MAGHRPSNHFCPLPGSGGGGPRGPMPLRVDTLTWLSTQAAPGRVMVWPAVRPGICPGPDVWRIPLGPLPHEFRGWIAPCRPRLGASEAGDWLRRPSEGALPGPYIALRSIPKLPPPEDISGILKELQQLAKELRQKRLSLGYSQADVGIAVGALFGKVLSQTTICRFEAQQLSVANMWKLRPLLKKWLKEVEAENLLGLCKMEMILQQSGKWRRASRERRIGNSLEKFFQRCPKPTPQQISHIAGCLQLQKDVVRVWFYNRSKMGSRPTNDASPREIVGTAGPPCPGAPVCFHLGLGLPVDIPHYTRLYSAGVAHSSAPATTLGLLRF.

The tract at residues methionine 1–methionine 25 is disordered. In terms of domain architecture, POU-specific spans aspartate 118 to glutamate 192. Positions glycine 210–threonine 269 form a DNA-binding region, homeobox.

It belongs to the POU transcription factor family. Class-5 subfamily. In terms of tissue distribution, expressed in skeletal and cardiac muscles, brain, heart and lung. Little or no detectable expression found in pancreas, kidney, liver or placenta.

It localises to the nucleus. Transcription factor that binds preferentially to the octamer motif (5'-ATGTTAAT-3'). May exert a regulatory function in meiotic events that are required for terminal differentiation of male germ cell. The protein is POU domain, class 5, transcription factor 2 (POU5F2) of Homo sapiens (Human).